The primary structure comprises 892 residues: Translation initiation factor IF-2 (892 aa).

Positions 51–296 (REHGSAPNKL…KGKRKPSTLQ (246 aa)) are disordered. The segment covering 68–82 (STLNIPSTGGKSKSV) has biased composition (polar residues). Residues 99-217 (EQAKAEEQAQ…KMAAENEGKW (119 aa)) show a composition bias toward basic and acidic residues. The segment covering 224–237 (QTESADYHVTTSQH) has biased composition (polar residues). Positions 239–254 (RAAEDENDAKVEGDRR) are enriched in basic and acidic residues. The segment covering 255–269 (SRTRGGKATKQKKGN) has biased composition (basic residues). Residues 270–283 (KLSESKADREEARA) are compositionally biased toward basic and acidic residues. The 170-residue stretch at 391–560 (HRAPVVTIMG…LLQAEVMELK (170 aa)) folds into the tr-type G domain. A G1 region spans residues 400–407 (GHVDHGKT). 400–407 (GHVDHGKT) contacts GTP. The tract at residues 425–429 (GITQH) is G2. Residues 446–449 (DTPG) form a G3 region. GTP is bound by residues 446-450 (DTPGH) and 500-503 (NKID). Positions 500-503 (NKID) are G4. A G5 region spans residues 536 to 538 (SAK).

The protein belongs to the TRAFAC class translation factor GTPase superfamily. Classic translation factor GTPase family. IF-2 subfamily.

It is found in the cytoplasm. In terms of biological role, one of the essential components for the initiation of protein synthesis. Protects formylmethionyl-tRNA from spontaneous hydrolysis and promotes its binding to the 30S ribosomal subunits. Also involved in the hydrolysis of GTP during the formation of the 70S ribosomal complex. The polypeptide is Translation initiation factor IF-2 (Yersinia enterocolitica serotype O:8 / biotype 1B (strain NCTC 13174 / 8081)).